The primary structure comprises 131 residues: Small ribosomal subunit protein uS8 (131 aa).

The protein belongs to the universal ribosomal protein uS8 family. As to quaternary structure, part of the 30S ribosomal subunit. Contacts proteins S5 and S12.

Functionally, one of the primary rRNA binding proteins, it binds directly to 16S rRNA central domain where it helps coordinate assembly of the platform of the 30S subunit. This chain is Small ribosomal subunit protein uS8, found in Chlorobium phaeobacteroides (strain DSM 266 / SMG 266 / 2430).